The following is a 102-amino-acid chain: Small ribosomal subunit protein uS10 (102 aa).

The protein belongs to the universal ribosomal protein uS10 family. Part of the 30S ribosomal subunit.

Involved in the binding of tRNA to the ribosomes. The polypeptide is Small ribosomal subunit protein uS10 (Leptospira borgpetersenii serovar Hardjo-bovis (strain JB197)).